We begin with the raw amino-acid sequence, 363 residues long: Chorismate synthase (363 aa).

NADP(+) is bound by residues Arg-48 and Arg-54. Residues 125-127, 237-238, Gly-277, 292-296, and Arg-318 contribute to the FMN site; these read RSS, NA, and KPTSS.

Belongs to the chorismate synthase family. As to quaternary structure, homotetramer. FMNH2 serves as cofactor.

It catalyses the reaction 5-O-(1-carboxyvinyl)-3-phosphoshikimate = chorismate + phosphate. Its pathway is metabolic intermediate biosynthesis; chorismate biosynthesis; chorismate from D-erythrose 4-phosphate and phosphoenolpyruvate: step 7/7. Catalyzes the anti-1,4-elimination of the C-3 phosphate and the C-6 proR hydrogen from 5-enolpyruvylshikimate-3-phosphate (EPSP) to yield chorismate, which is the branch point compound that serves as the starting substrate for the three terminal pathways of aromatic amino acid biosynthesis. This reaction introduces a second double bond into the aromatic ring system. In Pseudomonas paraeruginosa (strain DSM 24068 / PA7) (Pseudomonas aeruginosa (strain PA7)), this protein is Chorismate synthase.